The chain runs to 170 residues: Acireductone dioxygenase (170 aa).

The Fe(2+) site is built by His99, His101, Glu105, and His144. Residues His99, His101, Glu105, and His144 each coordinate Ni(2+).

The protein belongs to the acireductone dioxygenase (ARD) family. Monomer. Fe(2+) serves as cofactor. It depends on Ni(2+) as a cofactor.

It carries out the reaction 1,2-dihydroxy-5-(methylsulfanyl)pent-1-en-3-one + O2 = 3-(methylsulfanyl)propanoate + CO + formate + 2 H(+). It catalyses the reaction 1,2-dihydroxy-5-(methylsulfanyl)pent-1-en-3-one + O2 = 4-methylsulfanyl-2-oxobutanoate + formate + 2 H(+). It functions in the pathway amino-acid biosynthesis; L-methionine biosynthesis via salvage pathway; L-methionine from S-methyl-5-thio-alpha-D-ribose 1-phosphate: step 5/6. Catalyzes 2 different reactions between oxygen and the acireductone 1,2-dihydroxy-3-keto-5-methylthiopentene (DHK-MTPene) depending upon the metal bound in the active site. Fe-containing acireductone dioxygenase (Fe-ARD) produces formate and 2-keto-4-methylthiobutyrate (KMTB), the alpha-ketoacid precursor of methionine in the methionine recycle pathway. Ni-containing acireductone dioxygenase (Ni-ARD) produces methylthiopropionate, carbon monoxide and formate, and does not lie on the methionine recycle pathway. This chain is Acireductone dioxygenase, found in Bacillus cytotoxicus (strain DSM 22905 / CIP 110041 / 391-98 / NVH 391-98).